The sequence spans 195 residues: Imidazoleglycerol-phosphate dehydratase (195 aa).

The protein belongs to the imidazoleglycerol-phosphate dehydratase family.

Its subcellular location is the cytoplasm. It catalyses the reaction D-erythro-1-(imidazol-4-yl)glycerol 3-phosphate = 3-(imidazol-4-yl)-2-oxopropyl phosphate + H2O. The protein operates within amino-acid biosynthesis; L-histidine biosynthesis; L-histidine from 5-phospho-alpha-D-ribose 1-diphosphate: step 6/9. The protein is Imidazoleglycerol-phosphate dehydratase of Campylobacter concisus (strain 13826).